The primary structure comprises 176 residues: Calcineurin subunit B type 2 (176 aa).

The N-myristoyl glycine moiety is linked to residue G2. 4 consecutive EF-hand domains span residues 18 to 53 (DEIK…QQNP), 57 to 85 (RVID…FSVK), 87 to 122 (DEEQ…MVGN), and 128 to 163 (QLQQ…MEIH). Ca(2+) is bound by residues D31, D33, S35, S37, E42, D63, D65, N67, E69, E74, D100, D102, D104, and E111. Positions 131 to 136 (QLVDKS) are calcineurin A binding. Positions 141, 143, 145, 147, and 152 each coordinate Ca(2+).

The protein belongs to the calcineurin regulatory subunit family. Forms a complex composed of a calmodulin-dependent catalytic subunit (also known as calcineurin A) and a regulatory Ca(2+)-binding subunit (also known as calcineurin B). There are three catalytic subunits, each encoded by a separate gene (PPP3CA, PPP3CB, and PPP3CC) and two regulatory subunits which are also encoded by separate genes (PPP3R1 and PPP3R2). Interacts with SPATA33 (via PQIIIT motif). As to expression, testis specific.

The protein localises to the mitochondrion. Functionally, regulatory subunit of calcineurin, a calcium-dependent, calmodulin stimulated protein phosphatase. Confers calcium sensitivity. This chain is Calcineurin subunit B type 2 (Ppp3r2), found in Rattus norvegicus (Rat).